The sequence spans 487 residues: MKPSTEWWRYLAPLAVIAIIALIPVPAGLESHTWLYFAVFTGVIVGLILEPVPGAVVAMVGISIIAILSPWLLFSPEQLAQPGFKFTAKSLSWAVSGFSNSVIWLIFAAFMFGTGYEKTGLGRRIALILVKKMGHRTLFLGYAVMFSELILAPVTPSNSARGAGIIYPIIRNLPPLYQSQPNDSSSRSIGSYIMWMGIVADCVTSAIFLTAMAPNLLLIGLMKSASHATLSWGDWFLGMLPLSILLVLLVPWLAYVLYPPVLKSGDQVPRWAETELQAMGPLCSREKRMLGLMVGALVLWIFGGDYIDAAMVGYSVVALMLLLRIISWDDIVSNKAAWNVFFWLASLITLATGLNNTGFISWFGKLLAGSLSGYSPTIVMVALIVVFYLLRYFFASATAYTSALAPMMIAAALAMPEIPLPVFCLMVGAAIGLGSILTPYATGPSPIYYGSGYLPTVDYWRLGAIFGLIFLVLLVITGLLWMPVVLL.

A run of 14 helical transmembrane segments spans residues 10 to 30, 33 to 53, 54 to 74, 93 to 113, 137 to 157, 189 to 209, 236 to 256, 292 to 312, 313 to 333, 340 to 360, 370 to 390, 393 to 413, 418 to 438, and 465 to 485; these read YLAPLAVIAIIALIPVPAGLE, TWLYFAVFTGVIVGLILEPVP, GAVVAMVGISIIAILSPWLLF, WAVSGFSNSVIWLIFAAFMFG, TLFLGYAVMFSELILAPVTPS, IGSYIMWMGIVADCVTSAIFL, FLGMLPLSILLVLLVPWLAYV, LMVGALVLWIFGGDYIDAAMV, GYSVVALMLLLRIISWDDIVS, VFFWLASLITLATGLNNTGFI, SLSGYSPTIVMVALIVVFYLL, FFASATAYTSALAPMMIAAAL, IPLPVFCLMVGAAIGLGSILT, and IFGLIFLVLLVITGLLWMPVV.

It belongs to the SLC13A/DASS transporter (TC 2.A.47) family. DIT1 subfamily.

The protein resides in the cell inner membrane. It carries out the reaction (2R,3R)-tartrate(out) + succinate(in) = (2R,3R)-tartrate(in) + succinate(out). In terms of biological role, catalyzes the uptake of tartrate in exchange for intracellular succinate. Essential for anaerobic L-tartrate fermentation. This chain is L-tartrate/succinate antiporter (ttdT), found in Escherichia coli O6:K15:H31 (strain 536 / UPEC).